The sequence spans 304 residues: dTDP-4-dehydrorhamnose reductase (304 aa).

NADH-binding positions include 15 to 17, 41 to 42, and 63 to 65; these read GQL, DI, and AYT. NADPH-binding positions include 16-17, 41-42, and 63-65; these read QL, DI, and AYT. 104 to 105 is a dTDP-beta-L-rhamnose binding site; it reads TD. NADH-binding residues include Tyr132 and Lys136. 2 residues coordinate NADPH: Tyr132 and Lys136. Tyr132 functions as the Proton donor/acceptor in the catalytic mechanism. Residue Trp157 coordinates dTDP-beta-L-rhamnose.

Belongs to the dTDP-4-dehydrorhamnose reductase family. It depends on Mg(2+) as a cofactor.

The catalysed reaction is dTDP-beta-L-rhamnose + NADP(+) = dTDP-4-dehydro-beta-L-rhamnose + NADPH + H(+). It functions in the pathway carbohydrate biosynthesis; dTDP-L-rhamnose biosynthesis. Involved in the biosynthesis of the dTDP-L-rhamnose which is a component of the critical linker, D-N-acetylglucosamine-L-rhamnose disaccharide, which connects the galactan region of arabinogalactan to peptidoglycan via a phosphodiester linkage. Catalyzes the reduction of dTDP-6-deoxy-L-lyxo-4-hexulose to yield dTDP-L-rhamnose. This Mycobacterium tuberculosis (strain CDC 1551 / Oshkosh) protein is dTDP-4-dehydrorhamnose reductase.